A 624-amino-acid chain; its full sequence is Chaperone protein HtpG (624 aa).

The tract at residues 1-336 is a; substrate-binding; sequence MKGQETRGFQ…SSDLPLNVSR (336 aa). The segment at 337 to 552 is b; sequence EILQDSTVTR…ADEMSTQMAK (216 aa). Residues 553–624 form a c region; that stretch reads LFAAAGQKVP…IRRMNQLLVS (72 aa).

It belongs to the heat shock protein 90 family. As to quaternary structure, homodimer.

The protein resides in the cytoplasm. In terms of biological role, molecular chaperone. Has ATPase activity. The protein is Chaperone protein HtpG of Shigella boydii serotype 4 (strain Sb227).